We begin with the raw amino-acid sequence, 509 residues long: Steroid 17-alpha-hydroxylase/17,20 lyase (509 aa).

N202 provides a ligand contact to substrate. C442 contributes to the heme binding site.

This sequence belongs to the cytochrome P450 family. It depends on heme as a cofactor.

It is found in the endoplasmic reticulum membrane. The protein resides in the microsome membrane. It carries out the reaction a C21-steroid + reduced [NADPH--hemoprotein reductase] + O2 = a 17alpha-hydroxy-C21-steroid + oxidized [NADPH--hemoprotein reductase] + H2O + H(+). The catalysed reaction is progesterone + reduced [NADPH--hemoprotein reductase] + O2 = 17alpha-hydroxyprogesterone + oxidized [NADPH--hemoprotein reductase] + H2O + H(+). It catalyses the reaction pregnenolone + reduced [NADPH--hemoprotein reductase] + O2 = 17alpha-hydroxypregnenolone + oxidized [NADPH--hemoprotein reductase] + H2O + H(+). The enzyme catalyses 17alpha-hydroxyprogesterone + reduced [NADPH--hemoprotein reductase] + O2 = androst-4-ene-3,17-dione + acetate + oxidized [NADPH--hemoprotein reductase] + H2O + 2 H(+). It carries out the reaction 17alpha-hydroxyprogesterone + reduced [NADPH--hemoprotein reductase] + O2 = 16alpha,17alpha-dihydroxyprogesterone + oxidized [NADPH--hemoprotein reductase] + H2O + H(+). The catalysed reaction is 16alpha,17alpha-dihydroxyprogesterone + reduced [NADPH--hemoprotein reductase] + O2 = 6beta,16alpha,17alpha-trihydroxyprogesterone + oxidized [NADPH--hemoprotein reductase] + H2O + H(+). It catalyses the reaction 17alpha-hydroxypregnenolone + reduced [NADPH--hemoprotein reductase] + O2 = 3beta-hydroxyandrost-5-en-17-one + acetate + oxidized [NADPH--hemoprotein reductase] + H2O + 2 H(+). The enzyme catalyses 16alpha,17alpha-dihydroxypregnenolone + reduced [NADPH--hemoprotein reductase] + O2 = 3beta,16alpha-dihydroxy-androst-5-en-17-one + acetate + oxidized [NADPH--hemoprotein reductase] + H2O + 2 H(+). It carries out the reaction 3beta-hydroxyandrost-5-en-17-one + reduced [NADPH--hemoprotein reductase] + O2 = 3beta,16alpha-dihydroxy-androst-5-en-17-one + oxidized [NADPH--hemoprotein reductase] + H2O + H(+). The catalysed reaction is androst-4-ene-3,17-dione + reduced [NADPH--hemoprotein reductase] + O2 = 16alpha-hydroxyandrost-4-ene-3,17-dione + oxidized [NADPH--hemoprotein reductase] + H2O + H(+). It functions in the pathway steroid hormone biosynthesis. The protein operates within steroid biosynthesis; glucocorticoid biosynthesis. Its activity is regulated as follows. Regulated predominantly by intracellular cAMP levels. The 17,20-lyase activity is stimulated by cytochrome b5, which acts as an allosteric effector increasing the Vmax of the lyase activity. In terms of biological role, a cytochrome P450 monooxygenase involved in corticoid and androgen biosynthesis. Catalyzes 17-alpha hydroxylation of C21 steroids, which is common for both pathways. A second oxidative step, required only for androgen synthesis, involves an acyl-carbon cleavage. The 17-alpha hydroxy intermediates, as part of adrenal glucocorticoids biosynthesis pathway, are precursors of cortisol. Hydroxylates steroid hormones, pregnenolone and progesterone to form 17-alpha hydroxy metabolites, followed by the cleavage of the C17-C20 bond to form C19 steroids, dehydroepiandrosterone (DHEA) and androstenedione. Has 16-alpha hydroxylase activity. Catalyzes 16-alpha hydroxylation of 17-alpha hydroxy pregnenolone, followed by the cleavage of the C17-C20 bond to form 16-alpha-hydroxy DHEA. Also 16-alpha hydroxylates androgens, relevant for estriol synthesis. Mechanistically, uses molecular oxygen inserting one oxygen atom into a substrate, and reducing the second into a water molecule, with two electrons provided by NADPH via cytochrome P450 reductase (CPR; NADPH-ferrihemoprotein reductase). The sequence is that of Steroid 17-alpha-hydroxylase/17,20 lyase (CYP17A1) from Capra hircus (Goat).